A 332-amino-acid chain; its full sequence is DNA-directed RNA polymerase subunit alpha (332 aa).

The tract at residues 1-230 (MKKITTSAYM…KQMSIFNNVL (230 aa)) is alpha N-terminal domain (alpha-NTD). Residues 246–332 (EHSKLLESVE…LRKKISELKS (87 aa)) form an alpha C-terminal domain (alpha-CTD) region.

Belongs to the RNA polymerase alpha chain family. Homodimer. The RNAP catalytic core consists of 2 alpha, 1 beta, 1 beta' and 1 omega subunit. When a sigma factor is associated with the core the holoenzyme is formed, which can initiate transcription.

The catalysed reaction is RNA(n) + a ribonucleoside 5'-triphosphate = RNA(n+1) + diphosphate. Its function is as follows. DNA-dependent RNA polymerase catalyzes the transcription of DNA into RNA using the four ribonucleoside triphosphates as substrates. The sequence is that of DNA-directed RNA polymerase subunit alpha from Campylobacter fetus subsp. fetus (strain 82-40).